Consider the following 258-residue polypeptide: Microtubule-associated protein RP/EB family member 1 (258 aa).

In terms of domain architecture, Calponin-homology (CH) spans 14 to 116 (NLSRHDMLAW…FVQWFKKFFD (103 aa)). An EB1 C-terminal domain is found at 175-245 (KKAAGDDESA…LYATDEGFVI (71 aa)).

The protein belongs to the MAPRE family.

Its subcellular location is the cytoplasm. It is found in the cytoskeleton. It localises to the microtubule organizing center. The protein resides in the centrosome. The protein localises to the golgi apparatus. Its subcellular location is the spindle. It is found in the spindle pole. Its function is as follows. Plus-end tracking protein (+TIP) that binds to the plus-end of microtubules and regulates the dynamics of the microtubule cytoskeleton. Promotes cytoplasmic microtubule nucleation and elongation. Involved in mitotic spindle positioning by stabilizing microtubules and promoting dynamic connection between astral microtubules and the cortex during mitotic chromosome segregation. The protein is Microtubule-associated protein RP/EB family member 1 (MAPRE1) of Gallus gallus (Chicken).